Here is a 1441-residue protein sequence, read N- to C-terminus: MYAVYKQAHPPTGLEFTMYCNFFNNSERNLVVAGTSQLYVYRLNRDAEALTKNDGSTEGKAHREKLELVASFSFFGNVMSMASVQLAGAKRDALLLSFKDAKLSVVEYDPGTHDLKTLSLHYFEEPELRDGFVQNVHTPRVRVDPDGRCAAMLIYGTRLVVLPFRRESLAEEHEGLMGEGQRSSFLPSYIIDVRALDEKLLNIIDLQFLHGYYEPTLLILFEPNQTWPGRVAVRQDTCSIVAISLNITQKVHPVIWSLTSLPFDCTQALAVPKPIGGVVIFAVNSLLYLNQSVPPYGVALNSLTTGTTAFPLRTQEGVRITLDCAQAAFISYDKMVISLKGGEIYVLTLITDGMRSVRAFHFDKAAASVLTTSMVTMEPGYLFLGSRLGNSLLLKYTEKLQEPPASSVREAADKEEPPSKKKRVEPAVGWTGGKTVPQDEVDEIEVYGSEAQSGTQLATYSFEVCDSMLNIGPCANAAVGEPAFLSEEFQNSPEPDLEIVVCSGYGKNGALSVLQKSIRPQVVTTFELPGCYDMWTVIAPVRKEEEETPKAESTEQEPSAPKAEEDGRRHGFLILSREDSTMILQTGQEIMELDTSGFATQGPTVFAGNIGDNRYIVQVSPLGIRLLEGVNQLHFIPVDLGAPIVQCAVADPYVVIMSAEGHVTMFLLKSDSYGGRHHRLALHKPPLHHQSKVIALCLYRDVSGMFTTESRLGGARDELGGRSGSEAEGLGSETSPTVDDEEEMLYGDSSALFSPSKEEARRSSQPPADRDPAPFKADPTHWCLLVRENGTMEIYQLPDWRLVFLVKNFPVGQRVLVDSSFGQPTTQGEVRKEEATRQGELPLVKEVLLVALGSRQSRPYLLVHVDQELLIYEAFPHDSQLGQGNLKVRFKKVPHNINFREKKPKPSKKKAEGCSTEEGSGGRGRVARFRYFEDIYGYSGVFICGPSPHWLLVTGRGALRLHPMGIDGPIDSFAPFHNVNCPRGFLYFNRQGELRISVLPAYLSYDAPWPVRKIPLRCTAHYVAYHVESKVYAVATSTNTPCTRIPRMTGEEKEFEAIERDDRYIHPQQEAFSIQLISPVSWEAIPNARIELEEWEHVTCMKTVSLRSEETVSGLKGYVAAGTCLMQGEEVTCRGRILIMDVIEVVPEPGQPLTKNKFKVLYEKEQKGPVTALCHCNGHLVSAIGQKIFLWSLRASELTGMAFIDTQLYIHQMISVKNFILAADVMKSISLLRYQEESKTLSLVSRDAKPLEVYSVDFMVDNAQLGFLVSDRDRNLMVYMYLPEAKESFGGMRLLRRADFHVGAHVNTFWRTPCRGAAEGPSKKSVVWENKHITWFATLDGGIGLLLPMQEKTYRRLLMLQNALTTMLPHHAGLNPRAFRMLHVDRRILQNAVRNVLDGELLNRYLYLSTMERSELAKKIGTTPDIILDDLLETDRVTAHF.

Disordered regions lie at residues 404–435 (PASSVREAADKEEPPSKKKRVEPAVGWTGGKT), 545–569 (EEETPKAESTEQEPSAPKAEEDGRR), 713–775 (GGAR…PAPF), and 899–921 (FREKKPKPSKKKAEGCSTEEGSG). Residues 410–419 (EAADKEEPPS) show a composition bias toward basic and acidic residues. Phosphoserine occurs at positions 754 and 764. Positions 756–773 (SKEEARRSSQPPADRDPA) are enriched in basic and acidic residues.

The protein belongs to the CPSF1 family. Component of the cleavage and polyadenylation specificity factor (CPSF) complex, composed of CPSF1, CPSF2, CPSF3, CPSF4 and FIP1L1. Found in a complex with CPSF1, FIP1L1 and PAPOLA. Interacts with FIP1L1 and SRRM1. Interacts with TUT1; the interaction is direct and mediates the recruitment of the CPSF complex on the 3'UTR of selected pre-mRNAs. Interacts with TENT2/GLD2.

The protein localises to the nucleus. Its subcellular location is the nucleoplasm. In terms of biological role, component of the cleavage and polyadenylation specificity factor (CPSF) complex that plays a key role in pre-mRNA 3'-end formation, recognizing the AAUAAA signal sequence and interacting with poly(A) polymerase and other factors to bring about cleavage and poly(A) addition. This subunit is involved in the RNA recognition step of the polyadenylation reaction. May play a role in eye morphogenesis and the development of retinal ganglion cell projections to the midbrain. The chain is Cleavage and polyadenylation specificity factor subunit 1 (Cpsf1) from Mus musculus (Mouse).